Consider the following 97-residue polypeptide: DNA-directed RNA polymerase subunit omega (97 aa).

Over residues 1–16 (MSTPNALAAFNSSPSL) the composition is skewed to polar residues. Residues 1–21 (MSTPNALAAFNSSPSLNAPEG) are disordered.

This sequence belongs to the RNA polymerase subunit omega family. As to quaternary structure, the RNAP catalytic core consists of 2 alpha, 1 beta, 1 beta' and 1 omega subunit. When a sigma factor is associated with the core the holoenzyme is formed, which can initiate transcription.

The catalysed reaction is RNA(n) + a ribonucleoside 5'-triphosphate = RNA(n+1) + diphosphate. Its function is as follows. Promotes RNA polymerase assembly. Latches the N- and C-terminal regions of the beta' subunit thereby facilitating its interaction with the beta and alpha subunits. This Saccharopolyspora erythraea (strain ATCC 11635 / DSM 40517 / JCM 4748 / NBRC 13426 / NCIMB 8594 / NRRL 2338) protein is DNA-directed RNA polymerase subunit omega.